The chain runs to 338 residues: Ketol-acid reductoisomerase (NADP(+)) (338 aa).

One can recognise a KARI N-terminal Rossmann domain in the interval 1–181; it reads MKVFYDKDCD…GGGRAGIIET (181 aa). NADP(+) is bound by residues 24 to 27, arginine 47, and serine 52; that span reads YGSQ. The active site involves histidine 107. Glycine 133 is a binding site for NADP(+). The KARI C-terminal knotted domain occupies 182–327; that stretch reads NFREETETDL…AKLRAMMPWI (146 aa). Positions 190, 194, 226, and 230 each coordinate Mg(2+). Serine 251 contributes to the substrate binding site.

Belongs to the ketol-acid reductoisomerase family. It depends on Mg(2+) as a cofactor.

It carries out the reaction (2R)-2,3-dihydroxy-3-methylbutanoate + NADP(+) = (2S)-2-acetolactate + NADPH + H(+). The enzyme catalyses (2R,3R)-2,3-dihydroxy-3-methylpentanoate + NADP(+) = (S)-2-ethyl-2-hydroxy-3-oxobutanoate + NADPH + H(+). It functions in the pathway amino-acid biosynthesis; L-isoleucine biosynthesis; L-isoleucine from 2-oxobutanoate: step 2/4. Its pathway is amino-acid biosynthesis; L-valine biosynthesis; L-valine from pyruvate: step 2/4. In terms of biological role, involved in the biosynthesis of branched-chain amino acids (BCAA). Catalyzes an alkyl-migration followed by a ketol-acid reduction of (S)-2-acetolactate (S2AL) to yield (R)-2,3-dihydroxy-isovalerate. In the isomerase reaction, S2AL is rearranged via a Mg-dependent methyl migration to produce 3-hydroxy-3-methyl-2-ketobutyrate (HMKB). In the reductase reaction, this 2-ketoacid undergoes a metal-dependent reduction by NADPH to yield (R)-2,3-dihydroxy-isovalerate. The chain is Ketol-acid reductoisomerase (NADP(+)) from Janthinobacterium sp. (strain Marseille) (Minibacterium massiliensis).